The primary structure comprises 315 residues: Glutaminase (315 aa).

Substrate is bound by residues serine 70, asparagine 120, glutamate 166, asparagine 173, tyrosine 197, tyrosine 249, and valine 267.

Belongs to the glutaminase family. As to quaternary structure, homotetramer.

The enzyme catalyses L-glutamine + H2O = L-glutamate + NH4(+). This chain is Glutaminase, found in Sinorhizobium fredii (strain NBRC 101917 / NGR234).